The sequence spans 123 residues: Small ribosomal subunit protein uS12cz/uS12cy/uS12cx/uS12w (123 aa).

The span at 1–13 (MPTSNQLLRNSRQ) shows a compositional bias: polar residues. Residues 1–30 (MPTSNQLLRNSRQPVRKTKKTPALRGCPQR) are disordered. The segment covering 14–30 (PVRKTKKTPALRGCPQR) has biased composition (basic residues).

This sequence belongs to the universal ribosomal protein uS12 family. Part of the 30S ribosomal subunit.

It localises to the plastid. It is found in the chloroplast. With S4 and S5 plays an important role in translational accuracy. Located at the interface of the 30S and 50S subunits. The sequence is that of Small ribosomal subunit protein uS12cz/uS12cy/uS12cx/uS12w (rps12-A) from Pelargonium hortorum (Common geranium).